Consider the following 236-residue polypeptide: uncharacterized protein (236 aa).

Residues 15–34 (GGMAHIISEAVIAGSIGLYF) traverse the membrane as a helical segment. Positions 36–71 (KKISALEQTVQELQSQLEVQNNQLQWLIQQQTRRLA) form a coiled coil. Disordered regions lie at residues 83–113 (SPLP…FQFK) and 185–236 (ATTQ…IDCE). 2 stretches are compositionally biased toward polar residues: residues 93–102 (QQSTTTNAAG) and 185–195 (ATTQVSTFSKP). Residues 225–236 (ALDKILNDIDCE) are compositionally biased toward basic and acidic residues.

The protein localises to the membrane. This is an uncharacterized protein from Aedes vexans (Inland floodwater mosquito).